The sequence spans 180 residues: Oligoribonuclease (180 aa).

One can recognise an Exonuclease domain in the interval 7–170 (LIWIDLEMTG…SDIQDSIDEL (164 aa)). Residue Y128 is part of the active site.

It belongs to the oligoribonuclease family.

The protein localises to the cytoplasm. 3'-to-5' exoribonuclease specific for small oligoribonucleotides. In Ruthia magnifica subsp. Calyptogena magnifica, this protein is Oligoribonuclease.